The chain runs to 761 residues: Mitochondrial intermediate peptidase 1 (761 aa).

Histidine 530 provides a ligand contact to Zn(2+). The active site involves glutamate 531. Positions 534 and 537 each coordinate Zn(2+).

This sequence belongs to the peptidase M3 family. Requires Zn(2+) as cofactor.

The protein localises to the mitochondrion matrix. It catalyses the reaction Release of an N-terminal octapeptide as second stage of processing of some proteins imported into the mitochondrion.. In terms of biological role, cleaves proteins, imported into the mitochondrion, to their mature size. While most mitochondrial precursor proteins are processed to the mature form in one step by mitochondrial processing peptidase (MPP), the sequential cleavage by MIP of an octapeptide after initial processing by MPP is a required step for a subgroup of nuclear-encoded precursor proteins destined for the matrix or the inner membrane. The polypeptide is Mitochondrial intermediate peptidase 1 (OCT1) (Cryptococcus neoformans var. neoformans serotype D (strain B-3501A) (Filobasidiella neoformans)).